The chain runs to 255 residues: 5-oxoprolinase subunit A (255 aa).

Belongs to the LamB/PxpA family. In terms of assembly, forms a complex composed of PxpA, PxpB and PxpC.

It catalyses the reaction 5-oxo-L-proline + ATP + 2 H2O = L-glutamate + ADP + phosphate + H(+). Functionally, catalyzes the cleavage of 5-oxoproline to form L-glutamate coupled to the hydrolysis of ATP to ADP and inorganic phosphate. The polypeptide is 5-oxoprolinase subunit A (Rhodopseudomonas palustris (strain BisB18)).